We begin with the raw amino-acid sequence, 382 residues long: 4-hydroxy-3-methylbut-2-en-1-yl diphosphate synthase (flavodoxin) (382 aa).

[4Fe-4S] cluster contacts are provided by cysteine 290, cysteine 293, cysteine 327, and glutamate 334.

Belongs to the IspG family. [4Fe-4S] cluster is required as a cofactor.

The enzyme catalyses (2E)-4-hydroxy-3-methylbut-2-enyl diphosphate + oxidized [flavodoxin] + H2O + 2 H(+) = 2-C-methyl-D-erythritol 2,4-cyclic diphosphate + reduced [flavodoxin]. It participates in isoprenoid biosynthesis; isopentenyl diphosphate biosynthesis via DXP pathway; isopentenyl diphosphate from 1-deoxy-D-xylulose 5-phosphate: step 5/6. Its function is as follows. Converts 2C-methyl-D-erythritol 2,4-cyclodiphosphate (ME-2,4cPP) into 1-hydroxy-2-methyl-2-(E)-butenyl 4-diphosphate. This chain is 4-hydroxy-3-methylbut-2-en-1-yl diphosphate synthase (flavodoxin), found in Rhodopirellula baltica (strain DSM 10527 / NCIMB 13988 / SH1).